We begin with the raw amino-acid sequence, 197 residues long: Probable UbiX-like flavin prenyltransferase (197 aa).

Residues 9 to 11, serine 36, 87 to 90, and arginine 122 each bind FMN; these read GAT and SMKT.

It belongs to the UbiX/PAD1 family. YclB subfamily. In terms of assembly, homododecamer.

It carries out the reaction dimethylallyl phosphate + FMNH2 = prenylated FMNH2 + phosphate. In terms of biological role, involved in the non-oxidative decarboxylation and detoxification of phenolic derivatives under both aerobic and anaerobic conditions. Flavin prenyltransferase that catalyzes the synthesis of the prenylated FMN cofactor (prenyl-FMN) for phenolic acid decarboxylase. This Escherichia coli O157:H7 protein is Probable UbiX-like flavin prenyltransferase.